Consider the following 623-residue polypeptide: V-type proton ATPase catalytic subunit A (623 aa).

252 to 259 (GAFGCGKT) provides a ligand contact to ATP.

Belongs to the ATPase alpha/beta chains family. V-ATPase is a heteromultimeric enzyme composed of a peripheral catalytic V1 complex (main components: subunits A, B, C, D, E, and F) attached to an integral membrane V0 proton pore complex (main component: the proteolipid protein).

It carries out the reaction ATP + H2O + 4 H(+)(in) = ADP + phosphate + 5 H(+)(out). Functionally, catalytic subunit of the peripheral V1 complex of vacuolar ATPase. V-ATPase vacuolar ATPase is responsible for acidifying a variety of intracellular compartments in eukaryotic cells. The sequence is that of V-type proton ATPase catalytic subunit A from Vigna radiata var. radiata (Mung bean).